The sequence spans 341 residues: DNA-directed RNA polymerase subunit alpha (341 aa).

The segment at 1–237 (MLSLSKNWNA…EQLQLFISFE (237 aa)) is alpha N-terminal domain (alpha-NTD). Residues 252–341 (FSPYLLKRVD…LSKRYEDSYN (90 aa)) are alpha C-terminal domain (alpha-CTD).

The protein belongs to the RNA polymerase alpha chain family. Homodimer. The RNAP catalytic core consists of 2 alpha, 1 beta, 1 beta' and 1 omega subunit. When a sigma factor is associated with the core the holoenzyme is formed, which can initiate transcription.

It catalyses the reaction RNA(n) + a ribonucleoside 5'-triphosphate = RNA(n+1) + diphosphate. In terms of biological role, DNA-dependent RNA polymerase catalyzes the transcription of DNA into RNA using the four ribonucleoside triphosphates as substrates. This Rickettsia bellii (strain OSU 85-389) protein is DNA-directed RNA polymerase subunit alpha.